The following is a 72-amino-acid chain: Translation initiation factor IF-1 (72 aa).

An S1-like domain is found at 1-72; sequence MAKEEVLEFP…TKGRITYRFK (72 aa).

Belongs to the IF-1 family. In terms of assembly, component of the 30S ribosomal translation pre-initiation complex which assembles on the 30S ribosome in the order IF-2 and IF-3, IF-1 and N-formylmethionyl-tRNA(fMet); mRNA recruitment can occur at any time during PIC assembly.

It localises to the cytoplasm. Its function is as follows. One of the essential components for the initiation of protein synthesis. Stabilizes the binding of IF-2 and IF-3 on the 30S subunit to which N-formylmethionyl-tRNA(fMet) subsequently binds. Helps modulate mRNA selection, yielding the 30S pre-initiation complex (PIC). Upon addition of the 50S ribosomal subunit IF-1, IF-2 and IF-3 are released leaving the mature 70S translation initiation complex. The protein is Translation initiation factor IF-1 of Brucella abortus (strain 2308).